We begin with the raw amino-acid sequence, 394 residues long: Elongation factor Tu (394 aa).

The tr-type G domain occupies 10 to 205 (KPHMNVGTIG…TMDNYFDLPQ (196 aa)). The tract at residues 19–26 (GHVDHGKT) is G1. 19–26 (GHVDHGKT) contributes to the GTP binding site. Thr26 is a Mg(2+) binding site. The G2 stretch occupies residues 61-65 (GITIN). A G3 region spans residues 82–85 (DCPG). GTP is bound by residues 82–86 (DCPGH) and 137–140 (NKLD). A G4 region spans residues 137–140 (NKLD). Positions 173 to 175 (SAF) are G5.

Belongs to the TRAFAC class translation factor GTPase superfamily. Classic translation factor GTPase family. EF-Tu/EF-1A subfamily. In terms of assembly, monomer.

It localises to the cytoplasm. It catalyses the reaction GTP + H2O = GDP + phosphate + H(+). Its function is as follows. GTP hydrolase that promotes the GTP-dependent binding of aminoacyl-tRNA to the A-site of ribosomes during protein biosynthesis. The sequence is that of Elongation factor Tu from Borrelia turicatae (strain 91E135).